Reading from the N-terminus, the 1036-residue chain is PDZ domain-containing RING finger protein 4 (1036 aa).

The segment at 18 to 56 adopts an RING-type; degenerate zinc-finger fold; it reads CKLCGQVLEEPLCTPCGHVFCASCLLPWAVRRRRCPLQC. Positions 129 to 160 are enriched in gly residues; it reads ARGGCGPTPRAGRGGGARGGPPGGRWGRGRGP. The disordered stretch occupies residues 129–161; that stretch reads ARGGCGPTPRAGRGGGARGGPPGGRWGRGRGPG. PDZ domains lie at 224–314 and 402–486; these read TIVL…LRRT and EVEL…VARP. The segment at 515 to 590 is disordered; the sequence is HNEAMQPTAN…SLKSKRDLGQ (76 aa). Over residues 548–566 the composition is skewed to basic and acidic residues; sequence NHEKDSGVGRTDESLRNDE. A coiled-coil region spans residues 655–689; the sequence is NQGEQEGVEHELQLLNEELRNIELECQNIMQAHRL. Residues 726 to 735 show a composition bias toward basic and acidic residues; sequence EHPEKSDKDS. Residues 726–819 are disordered; the sequence is EHPEKSDKDS…VLEGSKLPDQ (94 aa). The segment covering 736–750 has biased composition (polar residues); it reads SSAYNTAESCRSTPL. Positions 774–799 are enriched in low complexity; it reads STMAATQSSSGQSSKESTSTKAKTTE. The segment covering 805 to 819 has biased composition (basic and acidic residues); that stretch reads ESKEKVLEGSKLPDQ.

In Homo sapiens (Human), this protein is PDZ domain-containing RING finger protein 4 (PDZRN4).